The sequence spans 346 residues: Acetyl-coenzyme A carboxylase carboxyl transferase subunit beta (346 aa).

The CoA carboxyltransferase N-terminal domain maps to 24 to 292 (LWIKCPKSGD…LPEVEPIAVA (269 aa)). The segment covering 300–311 (AEAEAAPDEVVE) has biased composition (acidic residues). The segment at 300-346 (AEAEAAPDEVVEVEAPAVDEIVEEKPAATKAKPRSKAKSKAAPKTDE) is disordered. Residues 330-340 (AKPRSKAKSKA) show a composition bias toward basic residues.

It belongs to the AccD/PCCB family. As to quaternary structure, acetyl-CoA carboxylase is a heterohexamer composed of biotin carboxyl carrier protein (AccB), biotin carboxylase (AccC) and two subunits each of ACCase subunit alpha (AccA) and ACCase subunit beta (AccD).

It is found in the cytoplasm. The catalysed reaction is N(6)-carboxybiotinyl-L-lysyl-[protein] + acetyl-CoA = N(6)-biotinyl-L-lysyl-[protein] + malonyl-CoA. The protein operates within lipid metabolism; malonyl-CoA biosynthesis; malonyl-CoA from acetyl-CoA: step 1/1. Its function is as follows. Component of the acetyl coenzyme A carboxylase (ACC) complex. Biotin carboxylase (BC) catalyzes the carboxylation of biotin on its carrier protein (BCCP) and then the CO(2) group is transferred by the transcarboxylase to acetyl-CoA to form malonyl-CoA. This chain is Acetyl-coenzyme A carboxylase carboxyl transferase subunit beta, found in Hirschia baltica (strain ATCC 49814 / DSM 5838 / IFAM 1418).